Consider the following 759-residue polypeptide: Glucosylceramidase (759 aa).

Glu247 functions as the Proton donor in the catalytic mechanism. The active-site Nucleophile is the Glu497. Residues 576 to 600 form a disordered region; it reads AFENESQRDPQSPAYSESQRNTESY. The span at 584 to 599 shows a compositional bias: polar residues; it reads DPQSPAYSESQRNTES.

Belongs to the glycosyl hydrolase 5 (cellulase A) family.

The protein localises to the membrane. The catalysed reaction is a beta-D-glucosyl-(1&lt;-&gt;1')-N-acylsphing-4-enine + H2O = an N-acylsphing-4-enine + D-glucose. In terms of biological role, specifically hydrolyzes the glucosidic linkage in glucosylceramide. May prevent accumulation of aberrent glucosylceramide containing immature ceramide. The sequence is that of Glucosylceramidase from Aspergillus fumigatus (Neosartorya fumigata).